A 735-amino-acid polypeptide reads, in one-letter code: MSGFDDLGVYYSDSFGGEQQVGDDGQAKKSQLKKRFREFLRQYRIGTDRTGFTFKYRDELKRHYNLGEYWIEVEMEDLASFDEDLADYLYKQPTEHLQLLEEAAQEVADEVTRPRPAGEETIQEIQVMLRSDANPANIRSLKSEQMSHLVKIPGIIIAATAVRAKATKISIQCRSCRNTIGNIAVRPGLEGYAMPRKCNTEQAGRPNCPLDPYFIIPDKCKCVDFQTLKLQESPDAVPHGELPRHMQLYCDRYLCDKVVPGNRVTIMGIYSIRKSGKTSTKGRDRVGVGIRSSYIRVVGIQVDTEGTGRSAAGAITPQEEEEFRRLAAKPDIYETVAKSIAPSIYGSSDIKKAIACLLFGGSRKRLPDGLTRRGDVNLLMLGDPGTAKSQLLKFVERCSPIGVYTSGKGSSAAGLTASVMRDPVSRNFIMEGGAMVLADGGVVCIDEFDKMREDDRVAIHEAMEQQTISIAKAGITTTLNSRCSVLAAANSVYGRWDDTKGEENIDFMPTILSRFDMIFIVKDEHNEQRDMTLAKHVMNVHLSARTQSSSVEGEVDLNTLKKYIAYCRAKCGPRLSAEAAEKLKNRYILMRSGAREHERETEKRSSIPITVRQLEAIVRISESLGKMKLQPFATETDVEEALRLFQVSTLDAAMSGSLSGVEGFTTQEDQEMLSRIEKQMKKRFAIGSQVSEHSIIQDFLKQKYPEHAIHKVLSLMMRRGEIQHRLQRKVLYRIK.

Residues 332 to 538 enclose the MCM domain; it reads IYETVAKSIA…RDMTLAKHVM (207 aa). Arg-372 provides a ligand contact to ADP. The short motif at 513 to 516 is the Arginine finger element; the sequence is SRFD.

It belongs to the MCM family. In terms of assembly, component of the mcm2-7 complex (RLF-M). The complex forms a toroidal hexameric ring with the proposed subunit order mcm2-mcm6-mcm4-mcm7-mcm3-mcm5. The heterodimer of mmcm3/mcm5 interacts with mcm4, mmcm6, mcm7 and weakly with mcm2. Component of the CMG helicase complex, composed of the mcm2-7 complex, the GINS complex and cdc45.

It localises to the nucleus. The protein localises to the chromosome. The enzyme catalyses ATP + H2O = ADP + phosphate + H(+). In terms of biological role, acts as a component of the MCM2-7 complex (MCM complex) which is the replicative helicase essential for 'once per cell cycle' DNA replication initiation and elongation in eukaryotic cells. Core component of CDC45-MCM-GINS (CMG) helicase, the molecular machine that unwinds template DNA during replication, and around which the replisome is built. The active ATPase sites in the MCM2-7 ring are formed through the interaction surfaces of two neighboring subunits such that a critical structure of a conserved arginine finger motif is provided in trans relative to the ATP-binding site of the Walker A box of the adjacent subunit. The six ATPase active sites, however, are likely to contribute differentially to the complex helicase activity. This Xenopus laevis (African clawed frog) protein is DNA replication licensing factor mcm5-A (mcm5-a).